A 440-amino-acid polypeptide reads, in one-letter code: Thymidine phosphorylase (440 aa).

Belongs to the thymidine/pyrimidine-nucleoside phosphorylase family. Homodimer.

The catalysed reaction is thymidine + phosphate = 2-deoxy-alpha-D-ribose 1-phosphate + thymine. It participates in pyrimidine metabolism; dTMP biosynthesis via salvage pathway; dTMP from thymine: step 1/2. In terms of biological role, the enzymes which catalyze the reversible phosphorolysis of pyrimidine nucleosides are involved in the degradation of these compounds and in their utilization as carbon and energy sources, or in the rescue of pyrimidine bases for nucleotide synthesis. In Yersinia enterocolitica serotype O:8 / biotype 1B (strain NCTC 13174 / 8081), this protein is Thymidine phosphorylase.